Consider the following 215-residue polypeptide: C' protein (215 aa).

A disordered region spans residues 12-34 (MPSFLKKILKLRGRRQEDESRSR). The interval 15 to 22 (FLKKILKL) is involved in self-degradation and in host STAT1 degradation.

The protein belongs to the respirovirus protein C family. In terms of assembly, the different isoforms interact (via C-terminus) with unphosphorylated and phosphorylated human STAT1 (via N-terminus), favoring the formation of parallel STAT1 homodimers. The different isoforms do not interact with host STAT2. C protein interacts with L protein; this interaction has an inhibitory effect on viral transcription and replication. Y1 and Y2 proteins are produced not only by alternative initiation, but also by proteolytic cleavage of C'. Only alternative initiation is detected in vitro, whereas in vivo cleavage seems to be predominant.

The protein resides in the host cytoplasm. Its subcellular location is the virion. Its function is as follows. The different isoforms prevent the establishment of cellular antiviral state by blocking the interferon-alpha/beta (IFN-alpha/beta) and IFN-gamma signaling pathways. They inhibit IFN-alpha/beta induced tyrosine phosphorylation of STAT1 and STAT2. Blocking the IFN-alpha/beta pathway requires binding to STAT1 in the cytoplasm. They inhibit IFN-gamma induced serine phosphorylation of STAT1. Block the IFN-gamma pathway by binding to and stabilizing the parallel form of the STAT1 dimer, further inducing high-molecular-weight complex (HMWC) formation and inhibition of transcription by IFN-gamma. May also have a role in preventing the cell to enter apoptosis. Modulate regulation of viral transcription and replication. Overexpression inhibits the viral RNA polymerase. The absence of all C', C, Y1 and Y2 proteins leads to viral delayed growth. Plays an important role in virion particles release. Modulates virion shape. This chain is C' protein (P/V/C), found in Sendai virus (strain Z) (SeV).